The following is a 496-amino-acid chain: Glutamyl-tRNA(Gln) amidotransferase subunit A, mitochondrial (496 aa).

Active-site charge relay system residues include Lys80 and Ser161. Residue Ser185 is the Acyl-ester intermediate of the active site.

Belongs to the amidase family. GatA subfamily. Subunit of the heterotrimeric GatCAB amidotransferase (AdT) complex, composed of A, B and C subunits.

It is found in the mitochondrion. The enzyme catalyses L-glutamyl-tRNA(Gln) + L-glutamine + ATP + H2O = L-glutaminyl-tRNA(Gln) + L-glutamate + ADP + phosphate + H(+). In terms of biological role, allows the formation of correctly charged Gln-tRNA(Gln) through the transamidation of misacylated Glu-tRNA(Gln) in the mitochondria. The reaction takes place in the presence of glutamine and ATP through an activated gamma-phospho-Glu-tRNA(Gln). The chain is Glutamyl-tRNA(Gln) amidotransferase subunit A, mitochondrial from Culex quinquefasciatus (Southern house mosquito).